Consider the following 147-residue polypeptide: Austinoid biosynthesis cluster protein H (147 aa).

The protein belongs to the trt14 isomerase family. As to quaternary structure, homodimer.

Its pathway is secondary metabolite biosynthesis; terpenoid biosynthesis. Its function is as follows. Part of the gene cluster that mediates the biosynthesis of calidodehydroaustin, a fungal meroterpenoid. The first step of the pathway is the synthesis of 3,5-dimethylorsellinic acid by the polyketide synthase ausA. 3,5-dimethylorsellinic acid is then prenylated by the polyprenyl transferase ausN. Further epoxidation by the FAD-dependent monooxygenase ausM and cyclization by the probable terpene cyclase ausL lead to the formation of protoaustinoid A. Protoaustinoid A is then oxidized to spiro-lactone preaustinoid A3 by the combined action of the FAD-binding monooxygenases ausB and ausC, and the dioxygenase ausE. Acid-catalyzed keto-rearrangement and ring contraction of the tetraketide portion of preaustinoid A3 by ausJ lead to the formation of preaustinoid A4. The aldo-keto reductase ausK, with the help of ausH, is involved in the next step by transforming preaustinoid A4 into isoaustinone which is in turn hydroxylated by the P450 monooxygenase ausI to form austinolide. The cytochrome P450 monooxygenase ausG modifies austinolide to austinol. Austinol is further acetylated to austin by the O-acetyltransferase ausP, which spontaneously changes to dehydroaustin. The cytochrome P450 monooxygenase ausR then converts dehydroaustin is into 7-dehydrodehydroaustin. The hydroxylation catalyzed by ausR permits the O-acetyltransferase ausQ to add an additional acetyl group to the molecule, leading to the formation of acetoxydehydroaustin. The short chain dehydrogenase ausT catalyzes the reduction of the double bond present between carbon atoms 1 and 2 to convert 7-dehydrodehydroaustin into 1,2-dihydro-7-hydroxydehydroaustin. AusQ catalyzes not only an acetylation reaction but also the addition of the PKS ausV diketide product to 1,2-dihydro-7-hydroxydehydroaustin, forming precalidodehydroaustin. Finally, the iron/alpha-ketoglutarate-dependent dioxygenase converts precalidodehydroaustin into calidodehydroaustin. The protein is Austinoid biosynthesis cluster protein H of Aspergillus calidoustus.